The primary structure comprises 352 residues: Histidinol-phosphate aminotransferase (352 aa).

Lys-221 is subject to N6-(pyridoxal phosphate)lysine.

Belongs to the class-II pyridoxal-phosphate-dependent aminotransferase family. Histidinol-phosphate aminotransferase subfamily. As to quaternary structure, homodimer. It depends on pyridoxal 5'-phosphate as a cofactor.

It carries out the reaction L-histidinol phosphate + 2-oxoglutarate = 3-(imidazol-4-yl)-2-oxopropyl phosphate + L-glutamate. Its pathway is amino-acid biosynthesis; L-histidine biosynthesis; L-histidine from 5-phospho-alpha-D-ribose 1-diphosphate: step 7/9. The polypeptide is Histidinol-phosphate aminotransferase (Staphylococcus aureus (strain bovine RF122 / ET3-1)).